The following is an 82-amino-acid chain: Sec-independent protein translocase protein TatA (82 aa).

The chain crosses the membrane as a helical span at residues 1–21 (MGSFSIWHWLIVLLIVVMVFG). The tract at residues 46 to 82 (GASTDDSATTSAPAGQVTNNSTAADKTTIDVEAKHKS) is disordered. Over residues 49-70 (TDDSATTSAPAGQVTNNSTAAD) the composition is skewed to polar residues. Over residues 72–82 (TTIDVEAKHKS) the composition is skewed to basic and acidic residues.

The protein belongs to the TatA/E family. As to quaternary structure, the Tat system comprises two distinct complexes: a TatABC complex, containing multiple copies of TatA, TatB and TatC subunits, and a separate TatA complex, containing only TatA subunits. Substrates initially bind to the TatABC complex, which probably triggers association of the separate TatA complex to form the active translocon.

It localises to the cell inner membrane. Part of the twin-arginine translocation (Tat) system that transports large folded proteins containing a characteristic twin-arginine motif in their signal peptide across membranes. TatA could form the protein-conducting channel of the Tat system. The chain is Sec-independent protein translocase protein TatA from Acidovorax sp. (strain JS42).